The following is a 204-amino-acid chain: Protein Mis18-alpha (204 aa).

A phosphoserine mark is found at Ser-13, Ser-16, and Ser-17. A Mis18 domain is found at Pro-51–Leu-149. 4 residues coordinate Zn(2+): Cys-56, Cys-59, Cys-112, and Cys-115. Lys-133 is covalently cross-linked (Glycyl lysine isopeptide (Lys-Gly) (interchain with G-Cter in SUMO2)). Ser-204 is subject to Phosphoserine.

This sequence belongs to the mis18 family. In terms of assembly, homodimer, and heterodimer with OIP5/MIS18B. Identified in a complex containing MIS18A, OIP5/MIS18B, MIS18BP1, RBBP7 and RBBP4.

It is found in the nucleus. It localises to the chromosome. The protein resides in the centromere. In terms of biological role, required for recruitment of CENPA to centromeres and normal chromosome segregation during mitosis. The polypeptide is Protein Mis18-alpha (Mis18a) (Mus musculus (Mouse)).